We begin with the raw amino-acid sequence, 377 residues long: Protein MULTIPOLAR SPINDLE 1 (377 aa).

Positions 117–124 (LRRRFLRL) match the Nuclear localization signal motif.

As to expression, expressed in roots, stems, leaves, inflorescences and seedlings. Strongly expressed in meiocytes.

It is found in the nucleus. It localises to the cytoplasm. The protein resides in the cytoskeleton. Its subcellular location is the spindle. Functionally, involved in meiotic spindle organization in meiocytes thus regulating chromosome segregation. Required for formation of meiotic DNA double-strand breaks (DSBs) during early recombination processes. The sequence is that of Protein MULTIPOLAR SPINDLE 1 from Arabidopsis thaliana (Mouse-ear cress).